The chain runs to 902 residues: Ribonuclease E (902 aa).

Residues 39 to 119 enclose the S1 motif domain; it reads SNIYKGKITR…GTKGAALTTF (81 aa). Mg(2+)-binding residues include Asp-303 and Asp-346. Residues Cys-404 and Cys-407 each contribute to the Zn(2+) site. Residues 404 to 407 are required for zinc-mediated homotetramerization and catalytic activity; the sequence is CPRC. The segment at 881 to 902 is disordered; the sequence is GKNSAGVHSATNFSNSPVSKLK. Residues 889–902 are compositionally biased toward polar residues; that stretch reads SATNFSNSPVSKLK.

It belongs to the RNase E/G family. RNase E subfamily. Component of the RNA degradosome, which is a multiprotein complex involved in RNA processing and mRNA degradation. Within the RNA degradosome, RNase E assembles into a homotetramer formed by a dimer of dimers. The cofactor is Zn(2+). Requires Mg(2+) as cofactor.

The protein resides in the cytoplasm. Its subcellular location is the cell inner membrane. It carries out the reaction Endonucleolytic cleavage of single-stranded RNA in A- and U-rich regions.. Endoribonuclease that plays a central role in RNA processing and decay. Required for the maturation of 5S and 16S rRNAs and the majority of tRNAs. Also involved in the degradation of most mRNAs. The protein is Ribonuclease E of Buchnera aphidicola subsp. Acyrthosiphon pisum (strain APS) (Acyrthosiphon pisum symbiotic bacterium).